Here is a 331-residue protein sequence, read N- to C-terminus: MLLIGVAGTELSAQERDWLQHDAVAGVVLFKRNFASRTQVAELSAAIRAAAPRPQLICVDQEGGRVQRFREGYSALAPLQSFGALYATDPEGALAQARAHAQLMASEVRASGVDLSFAPVVDLARGNRAIGDRAFSDDPQVVASFTRAYVQALHAAGMGATLKHFPGHGTVLEDTHVDHASDPRPLDVLLAEDLVPFVAGIDAGADAVMMAHVVYPQVAPEPAGYASRWIEQILRGQLGFRGVVFSDDIGMAASFSAGGVAGRVHAHLDAGCDVVLVCHPELVAESLQAVAGRTLNTAALIGLIGRGALGWDGLLADAPTTSLSASFGTLA.

Residues Asp60, Arg68, Arg133, and 163-164 each bind substrate; that span reads KH. His176 acts as the Proton donor/acceptor in catalysis. The active-site Nucleophile is the Asp247.

Belongs to the glycosyl hydrolase 3 family. NagZ subfamily.

The protein localises to the cytoplasm. The enzyme catalyses Hydrolysis of terminal non-reducing N-acetyl-D-hexosamine residues in N-acetyl-beta-D-hexosaminides.. It participates in cell wall biogenesis; peptidoglycan recycling. Plays a role in peptidoglycan recycling by cleaving the terminal beta-1,4-linked N-acetylglucosamine (GlcNAc) from peptide-linked peptidoglycan fragments, giving rise to free GlcNAc, anhydro-N-acetylmuramic acid and anhydro-N-acetylmuramic acid-linked peptides. The polypeptide is Beta-hexosaminidase (Xanthomonas campestris pv. campestris (strain B100)).